The chain runs to 80 residues: Defensin coprisin (80 aa).

The first 20 residues, 1 to 20, serve as a signal peptide directing secretion; the sequence is MAKLIAFALVASLCLSMVLC. Residues 21-37 constitute a propeptide that is removed on maturation; sequence NPLPEEVQEEGLVRQKR. Cystine bridges form between Cys-40–Cys-71, Cys-57–Cys-76, and Cys-61–Cys-78.

It belongs to the invertebrate defensin family. Type 1 subfamily.

Its subcellular location is the secreted. It localises to the target cell membrane. Functionally, potent broad-spectrum antibacterial peptide against both Gram-positive (B.subtilis, S.epidermidis, and S.aureus) and Gram-negative bacteria (E.coli, S.typhimurium, and P.aeruginosa). Is also active against all antibiotic-resistant bacterial strains tested. Induces apoptosis in C.albicans, but does not disrupt the fungal plasma membrane at all. Acts by permeabilizing the bacterial cell membrane, but not human membranes. Also shows potent anti-inflammatory activities, since it reduces both LPS-induced nitric oxide release and pro-inflammatory cytokine production. Anti-inflammatory activities are initiated by suppressing the binding of LPS to toll-like receptor 4 (TLR4), and subsequently inhibiting the phosphorylation of p38 mitogen-activated protein kinase (MAPK) and nuclear translocation of NF-kB (TNFRSF11A). Does not show hemolytic activity against human erythrocytes. The polypeptide is Defensin coprisin (Copris tripartitus (Dung beetle)).